The following is a 581-amino-acid chain: Proline--tRNA ligase (581 aa).

It belongs to the class-II aminoacyl-tRNA synthetase family. ProS type 1 subfamily. As to quaternary structure, homodimer.

It is found in the cytoplasm. It catalyses the reaction tRNA(Pro) + L-proline + ATP = L-prolyl-tRNA(Pro) + AMP + diphosphate. Functionally, catalyzes the attachment of proline to tRNA(Pro) in a two-step reaction: proline is first activated by ATP to form Pro-AMP and then transferred to the acceptor end of tRNA(Pro). As ProRS can inadvertently accommodate and process non-cognate amino acids such as alanine and cysteine, to avoid such errors it has two additional distinct editing activities against alanine. One activity is designated as 'pretransfer' editing and involves the tRNA(Pro)-independent hydrolysis of activated Ala-AMP. The other activity is designated 'posttransfer' editing and involves deacylation of mischarged Ala-tRNA(Pro). The misacylated Cys-tRNA(Pro) is not edited by ProRS. This chain is Proline--tRNA ligase, found in Chlamydia trachomatis serovar A (strain ATCC VR-571B / DSM 19440 / HAR-13).